The chain runs to 117 residues: Biofilm growth-associated repressor (117 aa).

The 95-residue stretch at A20–E114 folds into the HTH arsR-type domain. The segment at residues V54–E77 is a DNA-binding region (H-T-H motif).

Represses an operon that comprises at least itself and blh. Binds to a palindromic AT-rich sequence spanning the -10 region of the blh promoter and blocks transcription of the operon. The protein is Biofilm growth-associated repressor (bigR) of Agrobacterium fabrum (strain C58 / ATCC 33970) (Agrobacterium tumefaciens (strain C58)).